A 161-amino-acid chain; its full sequence is Protein OPG060 (161 aa).

Belongs to the orthopoxvirus OPG058 family.

The protein is Protein OPG060 (OPG060) of Homo sapiens (Human).